A 149-amino-acid polypeptide reads, in one-letter code: Nucleoside deoxyribosyltransferase (149 aa).

Catalysis depends on Glu90, which acts as the Nucleophile.

This sequence belongs to the nucleoside deoxyribosyltransferase family.

It carries out the reaction 2-deoxy-D-ribosyl-base(1) + base(2) = 2-deoxy-D-ribosyl-base(2) + base(1).. The protein operates within nucleotide metabolism; nucleotide salvage pathway. Catalyzes the cleavage of the glycosidic bond of 2'-deoxyribonucleosides and the transfer of the deoxyribosyl moiety to an acceptor purine or pyrimidine base. The chain is Nucleoside deoxyribosyltransferase (ntd) from Lactobacillus johnsonii (strain CNCM I-12250 / La1 / NCC 533).